Consider the following 209-residue polypeptide: Orotate phosphoribosyltransferase (209 aa).

5-phospho-alpha-D-ribose 1-diphosphate contacts are provided by residues R96, K100, H102, and 122-130 (EDLISTGGS). S126 is an orotate binding site.

The protein belongs to the purine/pyrimidine phosphoribosyltransferase family. PyrE subfamily. In terms of assembly, homodimer. It depends on Mg(2+) as a cofactor.

The catalysed reaction is orotidine 5'-phosphate + diphosphate = orotate + 5-phospho-alpha-D-ribose 1-diphosphate. It participates in pyrimidine metabolism; UMP biosynthesis via de novo pathway; UMP from orotate: step 1/2. In terms of biological role, catalyzes the transfer of a ribosyl phosphate group from 5-phosphoribose 1-diphosphate to orotate, leading to the formation of orotidine monophosphate (OMP). The polypeptide is Orotate phosphoribosyltransferase (Streptococcus thermophilus (strain ATCC BAA-491 / LMD-9)).